A 301-amino-acid chain; its full sequence is UDP-N-acetylenolpyruvoylglucosamine reductase (301 aa).

An FAD-binding PCMH-type domain is found at 26 to 193; it reads KTGGPAQYLA…VSATFGLEPG (168 aa). Arg172 is a catalytic residue. Catalysis depends on Ser222, which acts as the Proton donor. The active site involves Glu292.

This sequence belongs to the MurB family. The cofactor is FAD.

The protein resides in the cytoplasm. It catalyses the reaction UDP-N-acetyl-alpha-D-muramate + NADP(+) = UDP-N-acetyl-3-O-(1-carboxyvinyl)-alpha-D-glucosamine + NADPH + H(+). The protein operates within cell wall biogenesis; peptidoglycan biosynthesis. Functionally, cell wall formation. In Lactobacillus johnsonii (strain CNCM I-12250 / La1 / NCC 533), this protein is UDP-N-acetylenolpyruvoylglucosamine reductase.